Reading from the N-terminus, the 434-residue chain is Asparagine--tRNA ligase (434 aa).

This sequence belongs to the class-II aminoacyl-tRNA synthetase family.

It is found in the cytoplasm. The catalysed reaction is tRNA(Asn) + L-asparagine + ATP = L-asparaginyl-tRNA(Asn) + AMP + diphosphate + H(+). This is Asparagine--tRNA ligase (asnS) from Pyrococcus furiosus (strain ATCC 43587 / DSM 3638 / JCM 8422 / Vc1).